The chain runs to 440 residues: Xaa-Pro dipeptidase (440 aa).

The Mn(2+) site is built by aspartate 244, aspartate 255, histidine 335, glutamate 380, and glutamate 419.

Belongs to the peptidase M24B family. Bacterial-type prolidase subfamily. The cofactor is Mn(2+).

The catalysed reaction is Xaa-L-Pro dipeptide + H2O = an L-alpha-amino acid + L-proline. In terms of biological role, splits dipeptides with a prolyl residue in the C-terminal position. The sequence is that of Xaa-Pro dipeptidase from Shewanella denitrificans (strain OS217 / ATCC BAA-1090 / DSM 15013).